The sequence spans 444 residues: Exodeoxyribonuclease 7 large subunit (444 aa).

Belongs to the XseA family. In terms of assembly, heterooligomer composed of large and small subunits.

It is found in the cytoplasm. It carries out the reaction Exonucleolytic cleavage in either 5'- to 3'- or 3'- to 5'-direction to yield nucleoside 5'-phosphates.. Bidirectionally degrades single-stranded DNA into large acid-insoluble oligonucleotides, which are then degraded further into small acid-soluble oligonucleotides. This Rickettsia canadensis (strain McKiel) protein is Exodeoxyribonuclease 7 large subunit.